A 297-amino-acid polypeptide reads, in one-letter code: NAD kinase (297 aa).

Asp-74 acts as the Proton acceptor in catalysis. Residues 74 to 75 (DG), Arg-79, 148 to 149 (NE), Arg-176, Asp-178, 189 to 194 (TAYALS), and Gln-248 contribute to the NAD(+) site.

This sequence belongs to the NAD kinase family. It depends on a divalent metal cation as a cofactor.

The protein localises to the cytoplasm. The catalysed reaction is NAD(+) + ATP = ADP + NADP(+) + H(+). Functionally, involved in the regulation of the intracellular balance of NAD and NADP, and is a key enzyme in the biosynthesis of NADP. Catalyzes specifically the phosphorylation on 2'-hydroxyl of the adenosine moiety of NAD to yield NADP. The sequence is that of NAD kinase from Blochmanniella pennsylvanica (strain BPEN).